A 570-amino-acid chain; its full sequence is Serine/threonine-protein kinase STY17 (570 aa).

The disordered stretch occupies residues 112-145; it reads LNGNSGDVDPSDPAVNEDAQSSYNSRSLAPPTFG. Residues 129 to 145 are compositionally biased toward polar residues; that stretch reads DAQSSYNSRSLAPPTFG. The ACT domain occupies 180–260; sequence EITFSTIDRP…PCSKQKSITF (81 aa). Residues 292 to 545 enclose the Protein kinase domain; sequence LKIEKKVACG…EIIEMLNQLI (254 aa). ATP-binding positions include 298-306 and Lys-319; that span reads VACGSYGEL. Asp-413 serves as the catalytic Proton acceptor. Ser-441 is modified (phosphoserine). Thr-445 carries the post-translational modification Phosphothreonine.

Belongs to the protein kinase superfamily. Ser/Thr protein kinase family. In terms of processing, autophosphorylated on serine and threonine residues. Autophosphorylated at Thr-445.

Its subcellular location is the cytoplasm. The protein resides in the cytosol. It carries out the reaction L-seryl-[protein] + ATP = O-phospho-L-seryl-[protein] + ADP + H(+). The catalysed reaction is L-threonyl-[protein] + ATP = O-phospho-L-threonyl-[protein] + ADP + H(+). Activated by autophosphorylation at Thr-445. Serine/threonine protein kinase that specifically phosphorylates chloroplast precursor proteins in the cytosol within the cleavable presequences (transit peptides). May be part of a cytosolic regulatory network involved in chloroplast protein import. Does not phosphorylate mitochondrion precursor proteins. Specific for ATP and does not utilize other NTPs. Plays a role in chloroplast biogenesis and differentiation in cotyledons, possibly through phosphorylation of chloroplast preproteins. This Arabidopsis thaliana (Mouse-ear cress) protein is Serine/threonine-protein kinase STY17.